Consider the following 289-residue polypeptide: Purine nucleoside phosphorylase (289 aa).

Met-1 is modified (N-acetylmethionine). Residues Ser-33, His-64, and 84 to 86 each bind phosphate; that span reads RFH. A purine D-ribonucleoside is bound at residue Tyr-88. Ala-116 contributes to the phosphate binding site. A purine D-ribonucleoside contacts are provided by Glu-201 and Met-219. Ser-220 lines the phosphate pocket. A purine D-ribonucleoside-binding residues include Asn-243 and His-257.

This sequence belongs to the PNP/MTAP phosphorylase family. As to quaternary structure, homotrimer.

It localises to the cytoplasm. It carries out the reaction inosine + phosphate = alpha-D-ribose 1-phosphate + hypoxanthine. The enzyme catalyses guanosine + phosphate = alpha-D-ribose 1-phosphate + guanine. The catalysed reaction is 2'-deoxyguanosine + phosphate = 2-deoxy-alpha-D-ribose 1-phosphate + guanine. It catalyses the reaction 2'-deoxyinosine + phosphate = 2-deoxy-alpha-D-ribose 1-phosphate + hypoxanthine. Its pathway is purine metabolism; purine nucleoside salvage. Its function is as follows. Catalyzes the phosphorolytic breakdown of the N-glycosidic bond in the beta-(deoxy)ribonucleoside molecules, with the formation of the corresponding free purine bases and pentose-1-phosphate. Preferentially acts on 6-oxopurine nucleosides including inosine and guanosine. This Mus musculus (Mouse) protein is Purine nucleoside phosphorylase (Pnp).